The following is a 57-amino-acid chain: uncharacterized protein (57 aa).

The chain crosses the membrane as a helical span at residues 34-54 (AALLDAAALVVIPGLLTAAAV).

The protein resides in the membrane. This is an uncharacterized protein from Dictyostelium discoideum (Social amoeba).